We begin with the raw amino-acid sequence, 478 residues long: tRNA modification GTPase MnmE (478 aa).

3 residues coordinate (6S)-5-formyl-5,6,7,8-tetrahydrofolate: R36, E94, and K133. Positions 230-402 constitute a TrmE-type G domain; sequence GIHVVLAGRP…LVETLCAKVG (173 aa). N240 provides a ligand contact to K(+). GTP-binding positions include 240–245, 259–265, and 284–287; these read NAGKSS, TDVAGTT, and DTAG. S244 provides a ligand contact to Mg(2+). 3 residues coordinate K(+): T259, V261, and T264. Position 265 (T265) interacts with Mg(2+). K478 lines the (6S)-5-formyl-5,6,7,8-tetrahydrofolate pocket.

This sequence belongs to the TRAFAC class TrmE-Era-EngA-EngB-Septin-like GTPase superfamily. TrmE GTPase family. Homodimer. Heterotetramer of two MnmE and two MnmG subunits. K(+) serves as cofactor.

It localises to the cytoplasm. Its function is as follows. Exhibits a very high intrinsic GTPase hydrolysis rate. Involved in the addition of a carboxymethylaminomethyl (cmnm) group at the wobble position (U34) of certain tRNAs, forming tRNA-cmnm(5)s(2)U34. This is tRNA modification GTPase MnmE from Psychrobacter arcticus (strain DSM 17307 / VKM B-2377 / 273-4).